Reading from the N-terminus, the 55-residue chain is Rubredoxin-1 (55 aa).

One can recognise a Rubredoxin-like domain in the interval 1-54 (MKKWQCVVCGLIYDEAKGWPEEGIEAGTRWEDVPEDWLCPDCGVGKLDFEMIEI). Residues Cys6, Cys9, Cys39, and Cys42 each contribute to the Fe cation site.

The protein belongs to the rubredoxin family. The cofactor is Fe(3+).

The protein localises to the cytoplasm. It functions in the pathway hydrocarbon metabolism; alkane degradation. Involved in the hydrocarbon hydroxylating system, which transfers electrons from NADH to rubredoxin reductase and then through rubredoxin to alkane 1 monooxygenase. In Pseudomonas aeruginosa (strain ATCC 15692 / DSM 22644 / CIP 104116 / JCM 14847 / LMG 12228 / 1C / PRS 101 / PAO1), this protein is Rubredoxin-1 (rubA1).